The primary structure comprises 653 residues: ATP-dependent zinc metalloprotease FtsH 1 (653 aa).

The interval 1–20 (MPENKNDKENKNDKENKNTK) is disordered. At 1-30 (MPENKNDKENKNDKENKNTKEEKKKVKFSN) the chain is on the cytoplasmic side. The chain crosses the membrane as a helical span at residues 31-51 (IIWVYIIFAVFFIGALISLNW). Residues 52–126 (ENNPIISYSE…EYVESVGTKW (75 aa)) are Periplasmic-facing. A helical transmembrane segment spans residues 127–147 (WFGLLINIIPIVVMVLFFFWL). At 148–653 (YRSASAGARS…VVNHVNYQPV (506 aa)) the chain is on the cytoplasmic side. Residue 219 to 226 (GPPGTGKT) coordinates ATP. His441 contributes to the Zn(2+) binding site. The active site involves Glu442. Residues His445 and Asp518 each coordinate Zn(2+).

It in the central section; belongs to the AAA ATPase family. In the C-terminal section; belongs to the peptidase M41 family. Homohexamer. Zn(2+) serves as cofactor.

It localises to the cell inner membrane. Its function is as follows. Acts as a processive, ATP-dependent zinc metallopeptidase for both cytoplasmic and membrane proteins. Plays a role in the quality control of integral membrane proteins. The polypeptide is ATP-dependent zinc metalloprotease FtsH 1 (Petrotoga mobilis (strain DSM 10674 / SJ95)).